The primary structure comprises 453 residues: Aldehyde dehydrogenase, dimeric NADP-preferring (453 aa).

S2 is subject to N-acetylserine. K178 is subject to N6-acetyllysine. NAD(+) is bound at residue 188 to 193 (GSTAVG). Position 194 is an N6-acetyllysine (K194). Catalysis depends on residues E210 and C244.

Belongs to the aldehyde dehydrogenase family. In terms of assembly, homodimer.

The protein resides in the cytoplasm. It catalyses the reaction an aldehyde + NAD(+) + H2O = a carboxylate + NADH + 2 H(+). The catalysed reaction is octanal + NAD(+) + H2O = octanoate + NADH + 2 H(+). In terms of biological role, ALDHs play a major role in the detoxification of alcohol-derived acetaldehyde. They are involved in the metabolism of corticosteroids, biogenic amines, neurotransmitters, and lipid peroxidation. Oxidizes medium and long chain aldehydes into non-toxic fatty acids. Preferentially oxidizes aromatic aldehyde substrates. Comprises about 50 percent of corneal epithelial soluble proteins. May play a role in preventing corneal damage caused by ultraviolet light. The protein is Aldehyde dehydrogenase, dimeric NADP-preferring (Aldh3a1) of Rattus norvegicus (Rat).